The following is a 297-amino-acid chain: tRNA pseudouridine synthase B (297 aa).

Aspartate 41 functions as the Nucleophile in the catalytic mechanism.

The protein belongs to the pseudouridine synthase TruB family. Type 1 subfamily.

It carries out the reaction uridine(55) in tRNA = pseudouridine(55) in tRNA. Responsible for synthesis of pseudouridine from uracil-55 in the psi GC loop of transfer RNAs. This Synechococcus sp. (strain CC9311) protein is tRNA pseudouridine synthase B.